Reading from the N-terminus, the 303-residue chain is Probable 5-dehydro-4-deoxyglucarate dehydratase (303 aa).

Belongs to the DapA family.

It catalyses the reaction 5-dehydro-4-deoxy-D-glucarate + H(+) = 2,5-dioxopentanoate + CO2 + H2O. Its pathway is carbohydrate acid metabolism; D-glucarate degradation; 2,5-dioxopentanoate from D-glucarate: step 2/2. The sequence is that of Probable 5-dehydro-4-deoxyglucarate dehydratase from Acinetobacter baylyi (strain ATCC 33305 / BD413 / ADP1).